The sequence spans 382 residues: Alkanesulfonate monooxygenase (382 aa).

The protein belongs to the SsuD family. As to quaternary structure, homotetramer.

It catalyses the reaction an alkanesulfonate + FMNH2 + O2 = an aldehyde + FMN + sulfite + H2O + 2 H(+). Functionally, catalyzes the desulfonation of aliphatic sulfonates. The chain is Alkanesulfonate monooxygenase from Serratia proteamaculans (strain 568).